A 250-amino-acid polypeptide reads, in one-letter code: Large ribosomal subunit protein uL13c (250 aa).

Residues 1–47 (MATMACASSLTFPSAQTQKSFFGTNVKQTPVLSFPRPTVAAAVAVSA) constitute a chloroplast transit peptide.

In terms of assembly, component of the chloroplast large ribosomal subunit (LSU). Mature 70S chloroplast ribosomes of higher plants consist of a small (30S) and a large (50S) subunit. The 30S small subunit contains 1 molecule of ribosomal RNA (16S rRNA) and 24 different proteins. The 50S large subunit contains 3 rRNA molecules (23S, 5S and 4.5S rRNA) and 33 different proteins.

It is found in the plastid. The protein localises to the chloroplast. Component of the chloroplast ribosome (chloro-ribosome), a dedicated translation machinery responsible for the synthesis of chloroplast genome-encoded proteins, including proteins of the transcription and translation machinery and components of the photosynthetic apparatus. The chain is Large ribosomal subunit protein uL13c (RPL13) from Spinacia oleracea (Spinach).